Consider the following 258-residue polypeptide: 5-oxoprolinase subunit A (258 aa).

The protein belongs to the LamB/PxpA family. As to quaternary structure, forms a complex composed of PxpA, PxpB and PxpC.

The catalysed reaction is 5-oxo-L-proline + ATP + 2 H2O = L-glutamate + ADP + phosphate + H(+). In terms of biological role, catalyzes the cleavage of 5-oxoproline to form L-glutamate coupled to the hydrolysis of ATP to ADP and inorganic phosphate. This chain is 5-oxoprolinase subunit A, found in Deinococcus radiodurans (strain ATCC 13939 / DSM 20539 / JCM 16871 / CCUG 27074 / LMG 4051 / NBRC 15346 / NCIMB 9279 / VKM B-1422 / R1).